The primary structure comprises 202 residues: Urease accessory protein UreE (202 aa).

Residues 171–188 (HHGHSHSHDHDHDHDHQH) show a composition bias toward basic and acidic residues. The interval 171 to 202 (HHGHSHSHDHDHDHDHQHGPGCTHGHRGHDHH) is disordered.

This sequence belongs to the UreE family.

The protein resides in the cytoplasm. Involved in urease metallocenter assembly. Binds nickel. Probably functions as a nickel donor during metallocenter assembly. In Burkholderia ambifaria (strain ATCC BAA-244 / DSM 16087 / CCUG 44356 / LMG 19182 / AMMD) (Burkholderia cepacia (strain AMMD)), this protein is Urease accessory protein UreE.